We begin with the raw amino-acid sequence, 768 residues long: Translation factor GUF1 homolog, mitochondrial (768 aa).

A mitochondrion-targeting transit peptide spans 1–29; that stretch reads MRLWNRFSRLGNLLCACAACGCSFTPWRC. Positions 110-293 constitute a tr-type G domain; it reads SNIRNVAVVA…AIIERVPSPS (184 aa). Residues 119–126, 184–188, and 238–241 each bind GTP; these read AHVDHGKT, DTPGH, and TKMD.

Belongs to the TRAFAC class translation factor GTPase superfamily. Classic translation factor GTPase family. LepA subfamily.

The protein localises to the mitochondrion inner membrane. It catalyses the reaction GTP + H2O = GDP + phosphate + H(+). Its function is as follows. Promotes mitochondrial protein synthesis. May act as a fidelity factor of the translation reaction, by catalyzing a one-codon backward translocation of tRNAs on improperly translocated ribosomes. Binds to mitochondrial ribosomes in a GTP-dependent manner. This chain is Translation factor GUF1 homolog, mitochondrial, found in Trypanosoma brucei brucei (strain 927/4 GUTat10.1).